Here is a 1229-residue protein sequence, read N- to C-terminus: ABC transporter B family member 22 (1229 aa).

Helical transmembrane passes span 22 to 42, 69 to 89, 145 to 167, 171 to 193, 251 to 271, and 274 to 294; these read MGLG…IFFI, VALL…GYCW, LPNF…IMLW, IVGF…ALIN, GIAI…TWYG, and MVMY…CITY. One can recognise an ABC transmembrane type-1 1 domain in the interval 22–311; the sequence is MGLGLIGAVG…GLSNLKYFSE (290 aa). In terms of domain architecture, ABC transporter 1 spans 346 to 582; the sequence is VQFKHVKFMY…VDGQYTSLVR (237 aa). 381-388 is an ATP binding site; it reads GGSGSGKS. N-linked (GlcNAc...) asparagine glycosylation is found at Asn-529 and Asn-594. Helical transmembrane passes span 661-681 and 703-723; these read ALYG…YAYA and IYVL…IIQQ. One can recognise an ABC transmembrane type-1 2 domain in the interval 661–949; it reads ALYGCLSAVL…AGAMTMDLAK (289 aa). The N-linked (GlcNAc...) asparagine glycan is linked to Asn-758. Transmembrane regions (helical) follow at residues 782-800, 807-823, 885-908, and 923-943; these read VSLL…TLGL, SIVM…CFYT, WLAG…NYWY, and FFEL…AGAM. The region spanning 984-1222 is the ABC transporter 2 domain; it reads IKFVNVDFAY…GPTGVYFSLV (239 aa). An N-linked (GlcNAc...) asparagine glycan is attached at Asn-1004. Residue 1019 to 1026 coordinates ATP; the sequence is GPSGSGKS. Asn-1157 carries an N-linked (GlcNAc...) asparagine glycan.

The protein belongs to the ABC transporter superfamily. ABCB family. Multidrug resistance exporter (TC 3.A.1.201) subfamily.

The protein localises to the membrane. The protein is ABC transporter B family member 22 (ABCB22) of Arabidopsis thaliana (Mouse-ear cress).